Consider the following 132-residue polypeptide: UPF0719 inner membrane protein YjfL (132 aa).

Residues 1 to 6 lie on the Periplasmic side of the membrane; sequence MHILDS. The helical transmembrane segment at 7–27 threads the bilayer; it reads LLAFSAYFFIGVAMVIIFLFI. Residues 28–46 lie on the Cytoplasmic side of the membrane; sequence YSKITPHNEWQLIKNNNTA. Residues 47–67 form a helical membrane-spanning segment; it reads ASLAFSGTLLGYVIPLSSAAI. Residues 68 to 71 are Periplasmic-facing; it reads NAVS. The chain crosses the membrane as a helical span at residues 72-92; it reads IPDYFAWGGIALVIQLLVFAG. At 93 to 109 the chain is on the cytoplasmic side; that stretch reads VRLYMPALSEKIINHNT. The chain crosses the membrane as a helical span at residues 110-130; it reads AAGMFMGTAALAGGIFNAACM. Residues 131–132 are Periplasmic-facing; that stretch reads TW.

Belongs to the UPF0719 family.

Its subcellular location is the cell inner membrane. The sequence is that of UPF0719 inner membrane protein YjfL (yjfL) from Escherichia coli O157:H7.